The sequence spans 456 residues: Two pore potassium channel c (456 aa).

The segment covering 1–19 has biased composition (low complexity); that stretch reads MDTEPLLSPLSPSPHLLHP. A disordered region spans residues 1-112; that stretch reads MDTEPLLSPL…PPSLFDFIGG (112 aa). Over 1–152 the chain is Cytoplasmic; that stretch reads MDTEPLLSPL…RNPPPPPRRP (152 aa). Positions 52 to 67 are enriched in pro residues; that stretch reads HPPPPPPPPPPPPPPP. Residues 153-173 form a helical membrane-spanning segment; it reads AIVLHAFLFLLAYLAMGVTFY. Positions 192–211 form an intramembrane region, pore-forming; sequence DALYFCIVTLCTIGYGDITP. The helical transmembrane segment at 223–243 threads the bilayer; sequence FVLIGFGFVDILLSGMVSYVL. Over 244–279 the chain is Cytoplasmic; the sequence is DLQEHLLITALKNPRSVRKHRHNYIFDLKKGRMRVR. Residues 280–300 form a helical membrane-spanning segment; the sequence is MKVALALTVVAICVGVGAAVL. The pore-forming intramembrane region spans 310-329; that stretch reads DAVYLAVMSVTTVGYGDHAF. The chain crosses the membrane as a helical span at residues 336–356; the sequence is LFASAWLLVSTLAVARAFLYL. The Cytoplasmic portion of the chain corresponds to 357 to 456; it reads AEMRIDKRHR…LNEKKKGKKS (100 aa). EF-hand domains follow at residues 373–408 and 412–447; these read LSRD…EMGK and KDIM…VTDL. Residues D386, D388, N390, Y392, E397, D425, K431, and D436 each coordinate Ca(2+).

This sequence belongs to the two pore domain potassium channel (TC 1.A.1.7) family. Homodimer.

Its subcellular location is the membrane. In terms of biological role, inward-rectifying potassium channel. The chain is Two pore potassium channel c (TPKC) from Oryza sativa subsp. japonica (Rice).